The primary structure comprises 100 residues: Putative exopolysaccharide production repressor protein y4xQ (100 aa).

The next 2 membrane-spanning stretches (helical) occupy residues 9–29 (ILWL…GSIS) and 35–55 (TMVG…FLLW). The disordered stretch occupies residues 66–100 (TTGQFHGEEQPGDPRIAGTHGRTDGDPCFEDEDSR).

This sequence to Rhizobium exopolysaccharide production repressor protein (ExoX).

The protein resides in the cell membrane. In terms of biological role, could be involved in the inhibition of exopolysaccharide synthesis (EPS) and nodulation ability (nod). This is Putative exopolysaccharide production repressor protein y4xQ from Sinorhizobium fredii (strain NBRC 101917 / NGR234).